Consider the following 73-residue polypeptide: UPF0154 protein MYCGA5700 (73 aa).

The chain crosses the membrane as a helical span at residues 5 to 25 (LALGLSIPLCLIVGAFVGYFV).

This sequence belongs to the UPF0154 family.

It is found in the membrane. This is UPF0154 protein MYCGA5700 from Mycoplasmoides gallisepticum (strain R(low / passage 15 / clone 2)) (Mycoplasma gallisepticum).